Reading from the N-terminus, the 337-residue chain is MEEIIKPVSKELLKAELTEDRRLRMTNKSNNQIYIITHQNAPNVMREIGRLREIAFRAAGGGTGLSMDIDEYDTMEHPYKQLIVWNPEAEEILGGYRYLLGTDVRFDEAGAPILATSHMFHFSDAFIKEYLPQTIELGRSFVTLEYQSTRAGSKGLFALDNLWDGLGALTVVMPNVKYFFGKVTMYPSYHRRGRDMILYFLKKHFNDREELVTPMEPLILETSDEELRTLFCKDTFKEDYKILNTEIRKLGYNIPPLVNAYMSLSPTMRMFGTAINYEFGDVEETGILIAVDEILEDKRIRHIQTFIESHPDALKMPCESEGVFTPKVVTPQEGCCH.

This sequence belongs to the acetyltransferase family.

The enzyme catalyses a (3R)-hydroxyacyl-[ACP] + glycine = a lyso-glycine lipid + holo-[ACP] + H(+). The catalysed reaction is (3R)-hydroxyhexadecanoyl-[ACP] + glycine = N-[(3R)-3-hydroxyhexadecanoyl]-glycine + holo-[ACP] + H(+). Its pathway is lipid metabolism. In terms of biological role, is involved in the production of glycine lipids (GL), which are phosphorus-free membrane lipids important for fitness during growth of the human gut bacterium B.thetaiotaomicron in vivo and in vitro. Catalyzes the first step of GL biosynthesis, i.e. the N-acylation of glycine via addition of a 3-hydroxy fatty acyl group, to form a range of monoacylated glycine (also named lyso-glycine lipids or lyso-GL). Is important for the ability of B.thetaiotaomicron to adapt to stress and colonize the mammalian gut. Also seems to be required for the production of flavolipin, an acylated serine-glycine dipeptide. The chain is Glycine N(alpha)-acyltransferase from Bacteroides thetaiotaomicron (strain ATCC 29148 / DSM 2079 / JCM 5827 / CCUG 10774 / NCTC 10582 / VPI-5482 / E50).